The following is a 637-amino-acid chain: MLSVGRGIADITGEAADCGMLGYGKSDQRTAGIHQRLRSRAFVFRDDSQDGDARLLLIVAELPLPMQNVNEEVLRRLADLYGDTYSEQNTLITATHTHAGPGGYCGYLLYNLTTSGFRPATFAAIVDGIVESVEHAHADVAPAEVSLSHGELYGASINRSPSAFDRNPPADKAFFPKRVDPHTTLVRIDRGEATVGVIHFFATHGTSMTNRNHLISGDNKGFAAYHWERTVGGADYLAGQPDFIAAFAQTNPGDMSPNVDGPLSPEAPPDREFDNTRRTGLCQFEDAFTQLSGATPIGAGIDARFTYVDLGSVLVRGEYTPDGEERRTGRPMFGAGAMAGTDEGPGFHGFRQGRNPFWDRLSRAMYRLARPTAAAQAPKGIVMPARLPNRIHPFVQEIVPVQLVRIGRLYLIGIPGEPTIVAGLRLRRMVASIVGADLADVLCVGYTNAYIHYVTTPEEYLEQRYEGGSTLFGRWELCALMQTVAELAEAMRDGRPVTLGRRPRPTRELSWVRGAPADAGSFGAVIAEPSATYRPGQAVEAVFVSALPNNDLRRGGTYLEVVRREGASWVRIADDGDWATSFRWQRQGRAGSHVSIRWDVPGDTTPGQYRIVHHGTARDRNGMLTAFSATTREFTVV.

His34 lines the Mg(2+) pocket. Positions 96 and 204 each coordinate Zn(2+). The Nucleophile role is filled by Ser256. Zn(2+)-binding residues include Glu417 and Tyr453. 3 residues coordinate Mg(2+): Asp575, Asp577, and Thr580.

It belongs to the neutral ceramidase family. Requires Zn(2+) as cofactor. The cofactor is Mg(2+).

The enzyme catalyses an N-acylsphing-4-enine + H2O = sphing-4-enine + a fatty acid. The catalysed reaction is an N-acylsphinganine + H2O = sphinganine + a fatty acid. It catalyses the reaction an N-acyl-(4R)-4-hydroxysphinganine + H2O = (4R)-hydroxysphinganine + a fatty acid. It carries out the reaction N-(9Z-octadecenoyl)-sphing-4-enine + H2O = sphing-4-enine + (9Z)-octadecenoate. The enzyme catalyses N-(hexanoyl)sphing-4-enine + H2O = hexanoate + sphing-4-enine. The catalysed reaction is N-hexadecanoylsphing-4-enine + H2O = sphing-4-enine + hexadecanoate. It catalyses the reaction N-octadecanoylsphing-4-enine + H2O = sphing-4-enine + octadecanoate. It carries out the reaction N-eicosanoyl-sphing-4-enine + H2O = eicosanoate + sphing-4-enine. The enzyme catalyses N-(15Z-tetracosenoyl)-sphing-4-enine + H2O = (15Z)-tetracosenoate + sphing-4-enine. The catalysed reaction is N-tetracosanoyl-sphing-4-enine + H2O = tetracosanoate + sphing-4-enine. 90% of activity is inhibited by nickel, zinc and calcium ions. Magnesium, cobalt, copper and manganese ions inhibit between 50 and 80% of activity. Functionally, catalyzes the cleavage of the N-acyl linkage of the ceramides (Cers) to yield sphingosine (Sph) and free fatty acid. Also catalyzes the synthesis of Cers from Sph and fatty acid. Cers containning C6-C24 fatty acids are well hydrolyzed, and Cers with mono unsaturated fatty acids are much more hydrolyzed than those with saturated fatty acids. The protein is Neutral ceramidase of Mycobacterium tuberculosis (strain ATCC 25618 / H37Rv).